Here is a 213-residue protein sequence, read N- to C-terminus: Calcium-dependent cell adhesion molecule 1 (213 aa).

4 consecutive repeat copies span residues M1–S48, N49–Q97, W98–P146, and D147–N194. Residues M1 to N194 are 4 X approximate tandem repeats.

Belongs to the Dictyostelium CAD family. In terms of processing, the N-terminus is blocked.

It is found in the cell membrane. Mediates calcium-dependent cell-cell adhesion during the early stage of development. This Dictyostelium discoideum (Social amoeba) protein is Calcium-dependent cell adhesion molecule 1 (cadA).